The following is a 271-amino-acid chain: NAD kinase (271 aa).

Residue aspartate 52 is the Proton acceptor of the active site. NAD(+) is bound by residues 52 to 53 (DG), 129 to 130 (NE), arginine 155, aspartate 157, and alanine 192.

Belongs to the NAD kinase family. It depends on a divalent metal cation as a cofactor.

It localises to the cytoplasm. The enzyme catalyses NAD(+) + ATP = ADP + NADP(+) + H(+). Its function is as follows. Involved in the regulation of the intracellular balance of NAD and NADP, and is a key enzyme in the biosynthesis of NADP. Catalyzes specifically the phosphorylation on 2'-hydroxyl of the adenosine moiety of NAD to yield NADP. In Geobacillus stearothermophilus (Bacillus stearothermophilus), this protein is NAD kinase.